The sequence spans 375 residues: Growth/differentiation factor 8 (375 aa).

The signal sequence occupies residues 1-23 (MQKLAVYVYIYLFVQISVDPVAL). A propeptide spanning residues 24–266 (DGSSQPTENT…VTDTPKRSRR (243 aa)) is cleaved from the precursor. Asn-71 is a glycosylation site (N-linked (GlcNAc...) asparagine). 4 disulfides stabilise this stretch: Cys-272-Cys-282, Cys-281-Cys-340, Cys-309-Cys-372, and Cys-313-Cys-374.

The protein belongs to the TGF-beta family. As to quaternary structure, homodimer; disulfide-linked.

The protein localises to the secreted. In terms of biological role, acts specifically as a negative regulator of skeletal muscle growth. This is Growth/differentiation factor 8 (MSTN) from Excalfactoria chinensis (Blue-breasted quail).